Reading from the N-terminus, the 186-residue chain is Adenine phosphoribosyltransferase (186 aa).

This sequence belongs to the purine/pyrimidine phosphoribosyltransferase family. Homodimer.

The protein resides in the cytoplasm. The catalysed reaction is AMP + diphosphate = 5-phospho-alpha-D-ribose 1-diphosphate + adenine. The protein operates within purine metabolism; AMP biosynthesis via salvage pathway; AMP from adenine: step 1/1. Its function is as follows. Catalyzes a salvage reaction resulting in the formation of AMP, that is energically less costly than de novo synthesis. The chain is Adenine phosphoribosyltransferase from Xanthomonas campestris pv. campestris (strain B100).